The sequence spans 2512 residues: Probable polyketide synthase 5 (2512 aa).

The 431-residue stretch at 17 to 447 (MKGVAIVGIG…GSNCCLLISE (431 aa)) folds into the Ketosynthase family 3 (KS3) domain. Catalysis depends on for beta-ketoacyl synthase activity residues Cys187, His329, and His368. The segment at 638 to 671 (GVNPSFILGHSLGEIPTSYCSGMIDLDTFCYTVY) is acyl/malonyl transferase. Ser648 serves as the catalytic For acyl/malonyl transferase activity. Residues 928–1050 (IDHLGLSNSY…ANFQLLDHTI (123 aa)) are N-terminal hotdog fold. A PKS/mFAS DH domain is found at 928 to 1210 (IDHLGLSNSY…SKSLIPIKEL (283 aa)). The Proton acceptor; for dehydratase activity role is filled by His962. The segment at 1067 to 1210 (TLARLTKNEI…SKSLIPIKEL (144 aa)) is C-terminal hotdog fold. The active-site Proton donor; for dehydratase activity is the Asp1125. Residues 2430 to 2507 (AGSKNVDELF…VSIKIILNFL (78 aa)) form the Carrier domain. Residue Ser2467 is modified to O-(pantetheine 4'-phosphoryl)serine.

Pantetheine 4'-phosphate is required as a cofactor.

Its function is as follows. Probable polyketide synthase. The polypeptide is Probable polyketide synthase 5 (pks5) (Dictyostelium discoideum (Social amoeba)).